A 190-amino-acid polypeptide reads, in one-letter code: GTP cyclohydrolase 1 (190 aa).

The Zn(2+) site is built by C75, H78, and C146.

Belongs to the GTP cyclohydrolase I family. Toroid-shaped homodecamer, composed of two pentamers of five dimers.

It carries out the reaction GTP + H2O = 7,8-dihydroneopterin 3'-triphosphate + formate + H(+). Its pathway is cofactor biosynthesis; 7,8-dihydroneopterin triphosphate biosynthesis; 7,8-dihydroneopterin triphosphate from GTP: step 1/1. This Campylobacter curvus (strain 525.92) protein is GTP cyclohydrolase 1.